Consider the following 353-residue polypeptide: Photosystem II D2 protein (353 aa).

N-acetylthreonine is present on Thr2. At Thr2 the chain carries Phosphothreonine. Residues 41–61 form a helical membrane-spanning segment; that stretch reads CAYFALGGWFTGTTFVTSWYT. Residue His118 participates in chlorophyll a binding. Residues 125–141 form a helical membrane-spanning segment; that stretch reads GFMLRQFELARSVQLRP. Pheophytin a contacts are provided by Gln130 and Asn143. A helical transmembrane segment spans residues 153–166; it reads VFVSVFLIYPLGQS. His198 contacts chlorophyll a. Residues 208–228 traverse the membrane as a helical segment; that stretch reads AALLCAIHGATVENTLFEDGD. A plastoquinone is bound by residues His215 and Phe262. His215 provides a ligand contact to Fe cation. Position 269 (His269) interacts with Fe cation. Residues 279 to 295 traverse the membrane as a helical segment; that stretch reads GLWMSALGVVGLALNLR.

Belongs to the reaction center PufL/M/PsbA/D family. In terms of assembly, PSII is composed of 1 copy each of membrane proteins PsbA, PsbB, PsbC, PsbD, PsbE, PsbF, PsbH, PsbI, PsbJ, PsbK, PsbL, PsbM, PsbT, PsbX, PsbY, PsbZ, Psb30/Ycf12, at least 3 peripheral proteins of the oxygen-evolving complex and a large number of cofactors. It forms dimeric complexes. The D1/D2 heterodimer binds P680, chlorophylls that are the primary electron donor of PSII, and subsequent electron acceptors. It shares a non-heme iron and each subunit binds pheophytin, quinone, additional chlorophylls, carotenoids and lipids. There is also a Cl(-1) ion associated with D1 and D2, which is required for oxygen evolution. The PSII complex binds additional chlorophylls, carotenoids and specific lipids. serves as cofactor.

The protein resides in the plastid. The protein localises to the chloroplast thylakoid membrane. The catalysed reaction is 2 a plastoquinone + 4 hnu + 2 H2O = 2 a plastoquinol + O2. In terms of biological role, photosystem II (PSII) is a light-driven water:plastoquinone oxidoreductase that uses light energy to abstract electrons from H(2)O, generating O(2) and a proton gradient subsequently used for ATP formation. It consists of a core antenna complex that captures photons, and an electron transfer chain that converts photonic excitation into a charge separation. The D1/D2 (PsbA/PsbD) reaction center heterodimer binds P680, the primary electron donor of PSII as well as several subsequent electron acceptors. D2 is needed for assembly of a stable PSII complex. The protein is Photosystem II D2 protein of Aethionema grandiflorum (Persian stone-cress).